A 94-amino-acid chain; its full sequence is Co-chaperonin GroES (94 aa).

Belongs to the GroES chaperonin family. As to quaternary structure, heptamer of 7 subunits arranged in a ring. Interacts with the chaperonin GroEL.

The protein resides in the cytoplasm. Together with the chaperonin GroEL, plays an essential role in assisting protein folding. The GroEL-GroES system forms a nano-cage that allows encapsulation of the non-native substrate proteins and provides a physical environment optimized to promote and accelerate protein folding. GroES binds to the apical surface of the GroEL ring, thereby capping the opening of the GroEL channel. The chain is Co-chaperonin GroES from Clostridium botulinum (strain Eklund 17B / Type B).